Here is a 130-residue protein sequence, read N- to C-terminus: Small ribosomal subunit protein uS9 (130 aa).

Belongs to the universal ribosomal protein uS9 family.

The chain is Small ribosomal subunit protein uS9 from Geobacillus thermodenitrificans (strain NG80-2).